The sequence spans 423 residues: Putative transmembrane protein ORF103 (423 aa).

Positions 43 to 57 (EPKIEQEEPQQKPEV) are enriched in basic and acidic residues. Residues 43–91 (EPKIEQEEPQQKPEVVDVYSNETDKNEEEVSIITSEDEEEDEKGMLFKR) are disordered. Residues 67-84 (KNEEEVSIITSEDEEEDE) show a composition bias toward acidic residues. A run of 2 helical transmembrane segments spans residues 125–145 (IIGI…VAVL) and 162–182 (FSLC…GLAI). Positions 253–282 (DESGSEVSSEDEESDQETLLRNRKMPTNSK) are disordered. Helical transmembrane passes span 326 to 346 (LISA…IVGS) and 366 to 386 (IPTL…MCVL).

It is found in the host membrane. This chain is Putative transmembrane protein ORF103, found in Magallana gigas (Pacific oyster).